Consider the following 156-residue polypeptide: MSRRGVIQRRPVPPDSVYNSRLVSMIIRRIMRHGKKSLAARIVYDALKTIEERTGNNALEVFERAVRNATPLVEVKARRVGGATYQVPMEVRTERGTTLALRWLVQFSRSRPGRTMASRLANELLDAANESGNAIRKREETHRMAEANKAFAHYRY.

The protein belongs to the universal ribosomal protein uS7 family. Part of the 30S ribosomal subunit. Contacts proteins S9 and S11.

In terms of biological role, one of the primary rRNA binding proteins, it binds directly to 16S rRNA where it nucleates assembly of the head domain of the 30S subunit. Is located at the subunit interface close to the decoding center, probably blocks exit of the E-site tRNA. This chain is Small ribosomal subunit protein uS7, found in Trichormus variabilis (strain ATCC 29413 / PCC 7937) (Anabaena variabilis).